A 144-amino-acid polypeptide reads, in one-letter code: Endoribonuclease YbeY (144 aa).

Residues His-104, His-108, and His-114 each contribute to the Zn(2+) site.

The protein belongs to the endoribonuclease YbeY family. It depends on Zn(2+) as a cofactor.

It is found in the cytoplasm. Functionally, single strand-specific metallo-endoribonuclease involved in late-stage 70S ribosome quality control and in maturation of the 3' terminus of the 16S rRNA. This Nitratiruptor sp. (strain SB155-2) protein is Endoribonuclease YbeY.